The following is a 266-amino-acid chain: Acetyl esterase (266 aa).

The protein is Acetyl esterase (xynC) of Caldicellulosiruptor saccharolyticus (Caldocellum saccharolyticum).